The chain runs to 273 residues: NH(3)-dependent NAD(+) synthetase (273 aa).

46-53 is an ATP binding site; it reads GISGGQDS. D52 is a Mg(2+) binding site. Residue R139 coordinates deamido-NAD(+). Residue T159 coordinates ATP. E164 serves as a coordination point for Mg(2+). Deamido-NAD(+)-binding residues include K172 and D179. Positions 188 and 210 each coordinate ATP. 259–260 contacts deamido-NAD(+); that stretch reads HK.

The protein belongs to the NAD synthetase family. Homodimer.

It carries out the reaction deamido-NAD(+) + NH4(+) + ATP = AMP + diphosphate + NAD(+) + H(+). It functions in the pathway cofactor biosynthesis; NAD(+) biosynthesis; NAD(+) from deamido-NAD(+) (ammonia route): step 1/1. Functionally, catalyzes the ATP-dependent amidation of deamido-NAD to form NAD. Uses ammonia as a nitrogen source. The sequence is that of NH(3)-dependent NAD(+) synthetase from Streptococcus thermophilus (strain ATCC BAA-250 / LMG 18311).